Here is a 259-residue protein sequence, read N- to C-terminus: Tonin (259 aa).

Positions 1-18 (MWLQILSLVLSVGRIDAA) are cleaved as a signal peptide. The propeptide at 19-24 (PPGQSR) is activation peptide. Residues 25-256 (IVGGYKCEKN…FTSWIKKVMK (232 aa)) form the Peptidase S1 domain. Intrachain disulfides connect C31/C171, C48/C64, C150/C217, C182/C196, and C207/C232. H63 acts as the Charge relay system in catalysis. A Zn(2+)-binding site is contributed by H63. N106 is a glycosylation site (N-linked (GlcNAc...) asparagine). Residues H113 and H115 each contribute to the Zn(2+) site. D118 acts as the Charge relay system in catalysis. The N-linked (GlcNAc...) asparagine glycan is linked to N189. The active-site Charge relay system is the S211.

This sequence belongs to the peptidase S1 family. Kallikrein subfamily. Monomer. It depends on Zn(2+) as a cofactor. In terms of tissue distribution, found in submaxillary gland.

It carries out the reaction Preferential cleavage of Arg-|-Xaa bonds in small molecule substrates. Highly selective action to release kallidin (lysyl-bradykinin) from kininogen involves hydrolysis of Met-|-Xaa or Leu-|-Xaa.. In terms of biological role, this protein has both trypsin- and chymotrypsin-like activities, being able to release angiotensin II from angiotensin I or angiotensinogen. The protein is Tonin (Klk2) of Rattus norvegicus (Rat).